Reading from the N-terminus, the 500-residue chain is Probable cytosol aminopeptidase (500 aa).

2 residues coordinate Mn(2+): Lys264 and Asp269. Residue Lys276 is part of the active site. Residues Asp287, Asp346, and Glu348 each contribute to the Mn(2+) site. The active site involves Arg350.

It belongs to the peptidase M17 family. It depends on Mn(2+) as a cofactor.

The protein resides in the cytoplasm. The enzyme catalyses Release of an N-terminal amino acid, Xaa-|-Yaa-, in which Xaa is preferably Leu, but may be other amino acids including Pro although not Arg or Lys, and Yaa may be Pro. Amino acid amides and methyl esters are also readily hydrolyzed, but rates on arylamides are exceedingly low.. The catalysed reaction is Release of an N-terminal amino acid, preferentially leucine, but not glutamic or aspartic acids.. Presumably involved in the processing and regular turnover of intracellular proteins. Catalyzes the removal of unsubstituted N-terminal amino acids from various peptides. This chain is Probable cytosol aminopeptidase, found in Chlamydia felis (strain Fe/C-56) (Chlamydophila felis).